The primary structure comprises 506 residues: Protein P7 (506 aa).

RNA-binding stretches follow at residues 128–249 (ISYL…GKRE) and 325–355 (DGSY…FKIS).

It belongs to the phytoreovirus protein P7 family.

It localises to the virion. Its subcellular location is the host cytoplasm. Functionally, probable component of the transcriptional machinery present in the inner capsid. Displays dsRNA binding activity and may play an important role in the sorting of viral RNA and virion assembly. Together with the RNA-directed RNA polymerase P1 and capping enzyme P5, forms an transcriptional complex positioned near the channels situated at each of the five-fold vertices of the core. The protein is Protein P7 of Alopecurus aequalis (Barnyard grass).